A 158-amino-acid chain; its full sequence is Urease accessory protein UreE (158 aa).

This sequence belongs to the UreE family.

It is found in the cytoplasm. In terms of biological role, involved in urease metallocenter assembly. Binds nickel. Probably functions as a nickel donor during metallocenter assembly. The sequence is that of Urease accessory protein UreE from Klebsiella pneumoniae subsp. pneumoniae (strain ATCC 700721 / MGH 78578).